The primary structure comprises 240 residues: Thymidylate kinase (240 aa).

10–17 (GINGVGKS) serves as a coordination point for ATP.

The protein belongs to the thymidylate kinase family.

The enzyme catalyses dTMP + ATP = dTDP + ADP. The protein operates within pyrimidine metabolism; dTTP biosynthesis. Catalyzes the conversion of dTMP to dTDP. In African swine fever virus (strain Badajoz 1971 Vero-adapted) (Ba71V), this protein is Thymidylate kinase (TMK).